Here is a 670-residue protein sequence, read N- to C-terminus: Serine/threonine-rich protein adg2 (670 aa).

The signal sequence occupies residues 1 to 19 (MRRLTISGLLISLAKLCAG). Asparagine 77, asparagine 159, asparagine 204, asparagine 224, asparagine 274, asparagine 297, asparagine 327, asparagine 351, asparagine 370, asparagine 381, asparagine 405, asparagine 424, asparagine 435, asparagine 459, asparagine 478, asparagine 489, and asparagine 513 each carry an N-linked (GlcNAc...) asparagine glycan. The tract at residues 526 to 651 (GSVSSFSSSP…MSLPPSAGSS (126 aa)) is disordered.

It localises to the secreted. Its subcellular location is the endoplasmic reticulum. The polypeptide is Serine/threonine-rich protein adg2 (adg2) (Schizosaccharomyces pombe (strain 972 / ATCC 24843) (Fission yeast)).